Here is a 596-residue protein sequence, read N- to C-terminus: Elongation factor 4 (596 aa).

Residues Lys-2–Glu-184 form the tr-type G domain. GTP is bound by residues Asp-14 to Thr-19 and Asn-131 to Asp-134.

The protein belongs to the TRAFAC class translation factor GTPase superfamily. Classic translation factor GTPase family. LepA subfamily.

The protein localises to the cell inner membrane. The catalysed reaction is GTP + H2O = GDP + phosphate + H(+). In terms of biological role, required for accurate and efficient protein synthesis under certain stress conditions. May act as a fidelity factor of the translation reaction, by catalyzing a one-codon backward translocation of tRNAs on improperly translocated ribosomes. Back-translocation proceeds from a post-translocation (POST) complex to a pre-translocation (PRE) complex, thus giving elongation factor G a second chance to translocate the tRNAs correctly. Binds to ribosomes in a GTP-dependent manner. In Shewanella loihica (strain ATCC BAA-1088 / PV-4), this protein is Elongation factor 4.